A 398-amino-acid polypeptide reads, in one-letter code: Phosphoglycerate kinase (398 aa).

Substrate is bound by residues 21 to 23 (DIN), R36, 59 to 62 (HFGR), R118, and R151. ATP is bound by residues K201, E323, and 353–356 (GGDT).

Belongs to the phosphoglycerate kinase family. As to quaternary structure, monomer.

It localises to the cytoplasm. It catalyses the reaction (2R)-3-phosphoglycerate + ATP = (2R)-3-phospho-glyceroyl phosphate + ADP. The protein operates within carbohydrate degradation; glycolysis; pyruvate from D-glyceraldehyde 3-phosphate: step 2/5. In Ruegeria pomeroyi (strain ATCC 700808 / DSM 15171 / DSS-3) (Silicibacter pomeroyi), this protein is Phosphoglycerate kinase.